We begin with the raw amino-acid sequence, 293 residues long: Protein orai (293 aa).

Over 1–122 (MPRSHDPSRV…RAQLKASSRT (122 aa)) the chain is Cytoplasmic. The interval 62–81 (STAGGGSRNGVGSKEGSVTS) is disordered. The chain crosses the membrane as a helical span at residues 123–141 (SALLAGFAMVCLVELQYDQ). Residues 142–146 (STPKP) are Extracellular-facing. The helical transmembrane segment at 147–167 (LLIVLGVVTSLLVSVHLLALM) threads the bilayer. Topologically, residues 168–198 (MSTCILPYMEATGCTQDSPHIKLKFYIDLSW) are cytoplasmic. The chain crosses the membrane as a helical span at residues 199 to 219 (LFSTCIGLLLFLVEIGVIFYV). Residues 220–230 (KFTAVGYPTAG) lie on the Extracellular side of the membrane. Residues 231–251 (YITTAMLVPVGVVFVVFSYLI) form a helical membrane-spanning segment. Topologically, residues 252-293 (HKNRVSHSLGRFKHKVDTMKQFLDVEANLQKSTLAPSTIRDI) are cytoplasmic.

Belongs to the Orai family. As to expression, expressed in gonad sheath cells, hypodermis, intestine and spermatheca. Coexpressed with stim-1.

The protein localises to the membrane. Its function is as follows. Ca(2+) release-activated Ca(2+)-like (CRAC-like) channel subunit which mediates Ca(2+) influx and increase in Ca(2+)-selective current by synergy with the Ca(2+) sensor, stim-1. Required for Ca(2+) and IP3-dependent contractile activity of sheath cells and the spermatheca. Affects brood size and somatic cell function. This chain is Protein orai (orai-1), found in Caenorhabditis elegans.